The sequence spans 345 residues: Probable 3'(2'),5'-bisphosphate nucleotidase 4 (345 aa).

The active-site Proton acceptor is the aspartate 46. Mg(2+)-binding residues include glutamate 71, aspartate 134, valine 136, and aspartate 137. Threonine 139 acts as the Proton acceptor in catalysis. 4 residues coordinate adenosine 3',5'-bisphosphate: threonine 139, serine 247, lysine 250, and arginine 264. The AMP site is built by serine 247, lysine 250, and arginine 264.

Belongs to the inositol monophosphatase superfamily. Requires Mg(2+) as cofactor.

It catalyses the reaction 3'-phosphoadenylyl sulfate + H2O = adenosine 5'-phosphosulfate + phosphate. It carries out the reaction adenosine 3',5'-bisphosphate + H2O = AMP + phosphate. The catalysed reaction is adenosine 2',5'-bisphosphate + H2O = AMP + phosphate. The enzyme catalyses 1D-myo-inositol 1,4-bisphosphate + H2O = 1D-myo-inositol 4-phosphate + phosphate. It catalyses the reaction 1D-myo-inositol 1,3,4-trisphosphate + H2O = 1D-myo-inositol 3,4-bisphosphate + phosphate. Its pathway is signal transduction; phosphatidylinositol signaling pathway. Its function is as follows. Phosphatase that converts adenosine 3'-phosphate 5'-phosphosulfate (PAPS) to adenosine 5'-phosphosulfate (APS) and 3'(2')-phosphoadenosine 5'-phosphate (PAP) to AMP. Is also able to hydrolyze inositol 1,4-bisphosphate and inositol 1,3,4-trisphosphate. The protein is Probable 3'(2'),5'-bisphosphate nucleotidase 4 (SAL4) of Arabidopsis thaliana (Mouse-ear cress).